The sequence spans 348 residues: N-(sulfonatooxy)prop-2-enimidothioate sulfolyase (348 aa).

Kelch repeat units lie at residues 1–33 (MARTLQGEWMKVEQKGGQVPAPRSSHGIAVIGD), 34–85 (KLYC…VAVG), 87–133 (KLYV…FHSM), 139–194 (HVYV…VVQG), 209–254 (KIPT…FAHA), 259–314 (YIII…ASTT), and 322–348 (GLLVHGGKLMTNERTDEMYFFAVNSST). Glu46, Arg94, Thr129, Phe130, and Arg157 together coordinate a (Z)-N-(sulfonatooxy)alkanimidothioate. Arg94 acts as the Proton donor in catalysis. Arg157 serves as the catalytic Proton donor. Glu220 serves as the catalytic Proton acceptor. Residue Glu266 coordinates Fe(2+). Residue Arg269 coordinates a (Z)-N-(sulfonatooxy)alkanimidothioate. The Fe(2+) site is built by Asp270 and His274. A (Z)-N-(sulfonatooxy)alkanimidothioate contacts are provided by Trp309 and Val310.

As to quaternary structure, homodimer. Fe(2+) serves as cofactor. In terms of tissue distribution, expressed constitutively in roots, stems, leaves, flowers, siliques and seedlings.

It catalyses the reaction (Z)-N-(sulfonatooxy)prop-2-enimidothioate = allyl thiocyanate + sulfate. The enzyme catalyses (Z)-N-(sulfonatooxy)prop-2-enimidothioate = 2-(thiiran-2-yl)acetonitrile + sulfate. It carries out the reaction (Z)-N-(sulfonatooxy)prop-2-enimidothioate = allyl isothiocyanate + sulfate. The catalysed reaction is (Z)-phenyl-N-(sulfonatooxy)methanimidothioate = phenylacetonitrile + sulfur + sulfate. It catalyses the reaction glucoerucin + H2O = (Z)-4-methylsulfanylbutyl-N-(sulfonatooxy)methanimidothioate + D-glucose. The enzyme catalyses (Z)-4-methylsulfanylbutyl-N-(sulfonatooxy)methanimidothioate = 5-(methylsulfanyl)pentanenitrile + sulfur + sulfate + H(+). With respect to regulation, stimulated by the presence of Fe(2+) leading to an increase formation of both thiocyanate and epithionitrile with allylglucosinolate as substrate in the presence of myrosinase. Repressed by EDTA. Functionally, specifier protein that contributes to constitutive and herbivore-induced simple nitrile formation. Catalyzes allylthiocyanate and corresponding epithionitrile formation from allylglucosinolate in the presence of myrosinase. Also converts aliphatic glucosinolates, such as indol-3-ylmethylglucosinolate, 4-methylsulfinylbutylglucosinolate, 4-methylthiobutyl- and benzylisothiocyanate, to simple nitriles. The chain is N-(sulfonatooxy)prop-2-enimidothioate sulfolyase from Thlaspi arvense (Field penny-cress).